Reading from the N-terminus, the 1501-residue chain is Pleiotropic ABC efflux transporter of multiple drugs CDR1 (1501 aa).

Positions 1–30 (MSDSKMSSQDESKLEKAISQDSSSENHSIN) are disordered. Residues 1–513 (MSDSKMSSQD…NFLRMKGDPS (513 aa)) are Cytoplasmic-facing. Positions 2-512 (SDSKMSSQDE…RNFLRMKGDP (511 aa)) are NBD1. A compositionally biased stretch (basic and acidic residues) spans 8 to 18 (SQDESKLEKAI). One can recognise an ABC transporter 1 domain in the interval 150–404 (LATEGFRHFQ…FEKMGWKCPQ (255 aa)). The helical transmembrane segment at 514–534 (IPIFSVFGQLVMGLILSSVFY) threads the bilayer. Topologically, residues 535–548 (NLSQTTGSFYYRGA) are extracellular. Residues 549–569 (AMFFAVLFNAFSSLLEIMSLF) form a helical membrane-spanning segment. Over 570 to 597 (EARPIVEKHKKYALYRPSADALASIISE) the chain is Cytoplasmic. Residues 598 to 618 (LPVKLAMSMSFNFVFYFMVNF) form a helical membrane-spanning segment. Over 619-622 (RRNP) the chain is Extracellular. Residues 623-643 (GRFFFYWLMCIWCTFVMSHLF) form a helical membrane-spanning segment. Topologically, residues 644 to 654 (RSIGAVSTSIS) are cytoplasmic. The chain crosses the membrane as a helical span at residues 655–675 (GAMTPATVLLLAMVIYTGFVI). Over 676–764 (PTPSMLGWSR…QYYNSHKWRN (89 aa)) the chain is Extracellular. The helical transmembrane segment at 765–785 (LGITIGFAVFFLAIYIALTEF) threads the bilayer. The Cytoplasmic portion of the chain corresponds to 786-1195 (NKGAMQKGEI…TIVQDWRSPG (410 aa)). The segment at 786 to 1195 (NKGAMQKGEI…TIVQDWRSPG (410 aa)) is NBD2. The 245-residue stretch at 859 to 1103 (FFWRDLTYQV…MINYFEKYGA (245 aa)) folds into the ABC transporter 2 domain. 895-902 (GASGAGKT) serves as a coordination point for ATP. Residues 1137–1164 (RNSSEYQAVREEINRMEAELSKLPRDND) are a coiled coil. The chain crosses the membrane as a helical span at residues 1196 to 1216 (YIYSKIFLVVSAALFNGFSFF). Residues 1217–1229 (KAKNNMQGLQNQM) lie on the Extracellular side of the membrane. Residues 1230-1250 (FSVFMFFIPFNTLVQQMLPYF) traverse the membrane as a helical segment. The Cytoplasmic portion of the chain corresponds to 1251–1280 (VKQRDVYEVREAPSRTFSWFAFIAGQITSE). Residues 1281 to 1301 (IPYQVAVGTIAFFCWYYPLGL) traverse the membrane as a helical segment. At 1302 to 1314 (YNNATPTDSVNPR) the chain is on the extracellular side. The helical transmembrane segment at 1315–1335 (GVLMWMLVTAFYVYTATMGQL) threads the bilayer. Over 1336-1355 (CMSFSELADNAANLATLLFT) the chain is Cytoplasmic. Residues 1356–1376 (MCLNFCGVLAGPDVLPGFWIF) traverse the membrane as a helical segment. At 1377–1466 (MYRCNPFTYL…NSLYSERWRN (90 aa)) the chain is on the extracellular side. A helical transmembrane segment spans residues 1467–1487 (FGIFIAFIAINIILTVIFYWL). Over 1488–1501 (ARVPKGNREKKNKK) the chain is Cytoplasmic.

The protein belongs to the ABC transporter superfamily.

The protein localises to the cell membrane. Disulfiram reverses CDR1-mediated drug resistance by interaction with both ATP and substrate-binding sites of the transporter and may be useful for antifungal therapy. In terms of biological role, pleiotropic ABC efflux transporter that confers resistance to numerous chemicals including anisomycin, cycloheximide, fluconazole, miconazole, ketoconazole, itriconazole, nystatin, terbinafine, amorolfine, brefeldin A, amphotericin B, fluphenazine, as well as estrogen. Plays a role in farnesol-induced apoptotic process through glutathione efflux activity. Mediates in-to-out translocation of membrane phospholipids including aminophospholipids and thus regulates asymmetric distribution of phosphatidylethanolamine. Exhibits nucleoside triphosphatase activity. The sequence is that of Pleiotropic ABC efflux transporter of multiple drugs CDR1 (CDR1) from Candida albicans (strain SC5314 / ATCC MYA-2876) (Yeast).